The sequence spans 225 residues: UPF0758 protein swp_2203 (225 aa).

The MPN domain occupies 102–224 (ILSDPDLTRD…IVSFAERGWI (123 aa)). His173, His175, and Asp186 together coordinate Zn(2+). A JAMM motif motif is present at residues 173 to 186 (HNHPSGIAEPSTAD).

This sequence belongs to the UPF0758 family.

The protein is UPF0758 protein swp_2203 of Shewanella piezotolerans (strain WP3 / JCM 13877).